The sequence spans 208 residues: Interleukin-6 (208 aa).

Residues 1-29 (MNSRFTSAFTPFAVSLGLLLVMTSAFPTP) form the signal peptide. Asn38 carries N-linked (GlcNAc...) asparagine glycosylation. Cys72 and Cys78 form a disulfide bridge. Ser81 carries the post-translational modification Phosphoserine. Cys101 and Cys111 are joined by a disulfide.

It belongs to the IL-6 superfamily. Component of a hexamer of two molecules each of IL6, IL6R and IL6ST; first binds to IL6R to associate with the signaling subunit IL6ST. Interacts with IL6R (via the N-terminal ectodomain); this interaction may be affected by IL6R-binding with SORL1, hence decreasing IL6 cis signaling. Interacts with SORL1 (via the N-terminal ectodomain); this interaction leads to IL6 internalization and lysosomal degradation. May form a trimeric complex with the soluble SORL1 ectodomain and soluble IL6R receptor; this interaction might stabilize circulating IL6, hence promoting IL6 trans signaling.

The protein localises to the secreted. Its function is as follows. Cytokine with a wide variety of biological functions in immunity, tissue regeneration, and metabolism. Binds to IL6R, then the complex associates to the signaling subunit IL6ST/gp130 to trigger the intracellular IL6-signaling pathway. The interaction with the membrane-bound IL6R and IL6ST stimulates 'classic signaling', whereas the binding of IL6 and soluble IL6R to IL6ST stimulates 'trans-signaling'. Alternatively, 'cluster signaling' occurs when membrane-bound IL6:IL6R complexes on transmitter cells activate IL6ST receptors on neighboring receiver cells. IL6 is a potent inducer of the acute phase response. Rapid production of IL6 contributes to host defense during infection and tissue injury, but excessive IL6 synthesis is involved in disease pathology. In the innate immune response, is synthesized by myeloid cells, such as macrophages and dendritic cells, upon recognition of pathogens through toll-like receptors (TLRs) at the site of infection or tissue injury. In the adaptive immune response, is required for the differentiation of B cells into immunoglobulin-secreting cells. Plays a major role in the differentiation of CD4(+) T cell subsets. Essential factor for the development of T follicular helper (Tfh) cells that are required for the induction of germinal-center formation. Required to drive naive CD4(+) T cells to the Th17 lineage. Also required for proliferation of myeloma cells and the survival of plasmablast cells. Functionally, acts as an essential factor in bone homeostasis and on vessels directly or indirectly by induction of VEGF, resulting in increased angiogenesis activity and vascular permeability. Induces, through 'trans-signaling' and synergistically with IL1B and TNF, the production of VEGF. Involved in metabolic controls, is discharged into the bloodstream after muscle contraction increasing lipolysis and improving insulin resistance. 'Trans-signaling' in central nervous system also regulates energy and glucose homeostasis. Mediates, through GLP-1, crosstalk between insulin-sensitive tissues, intestinal L cells and pancreatic islets to adapt to changes in insulin demand. Also acts as a myokine. Plays a protective role during liver injury, being required for maintenance of tissue regeneration. Also has a pivotal role in iron metabolism by regulating HAMP/hepcidin expression upon inflammation or bacterial infection. Through activation of IL6ST-YAP-NOTCH pathway, induces inflammation-induced epithelial regeneration. The polypeptide is Interleukin-6 (IL6) (Bubalus bubalis (Domestic water buffalo)).